Here is a 136-residue protein sequence, read N- to C-terminus: Acyl carrier protein 2, chloroplastic (136 aa).

Residues 1 to 51 (MASIAASASISLQARPRQLAIAASQVKSFSNGRRSSLSFNLRQLPTRLTVS) constitute a chloroplast transit peptide. The Carrier domain occupies 56–131 (PETVDKVCAV…QAAALIEELL (76 aa)). Residue serine 91 is modified to O-(pantetheine 4'-phosphoryl)serine.

This sequence belongs to the acyl carrier protein (ACP) family. Post-translationally, 4'-phosphopantetheine is transferred from CoA to a specific serine of apo-ACP by acpS. This modification is essential for activity because fatty acids are bound in thioester linkage to the sulfhydryl of the prosthetic group.

It localises to the plastid. Its subcellular location is the chloroplast. In terms of biological role, carrier of the growing fatty acid chain in fatty acid biosynthesis. This chain is Acyl carrier protein 2, chloroplastic (ACP2), found in Arabidopsis thaliana (Mouse-ear cress).